Reading from the N-terminus, the 78-residue chain is MSRVCQVTGKRPAVGNNRSHAKNATKRRFLPNLQTHRFWVESEKRFVKLRLTAKGMRIIDKKGIETVLADMRARGENV.

Positions 1 to 25 are disordered; it reads MSRVCQVTGKRPAVGNNRSHAKNAT.

It belongs to the bacterial ribosomal protein bL28 family.

The chain is Large ribosomal subunit protein bL28 from Aliivibrio fischeri (strain ATCC 700601 / ES114) (Vibrio fischeri).